The chain runs to 34 residues: Corticostatin-2 (34 aa).

3 cysteine pairs are disulfide-bonded: C3–C32, C5–C21, and C11–C31.

This sequence belongs to the alpha-defensin family.

It is found in the secreted. Functionally, microbicidal activity and inhibits corticotropin (ACTH) stimulated corticosterone production. The sequence is that of Corticostatin-2 from Oryctolagus cuniculus (Rabbit).